We begin with the raw amino-acid sequence, 414 residues long: Heterogeneous nuclear ribonucleoprotein F (414 aa).

N-acetylmethionine is present on M1. M2 carries the N-acetylmethionine; in Heterogeneous nuclear ribonucleoprotein F, N-terminally processed modification. An RRM 1 domain is found at 11–90 (FVVKLRGLPW…RYIEVFKSHR (80 aa)). K72 participates in a covalent cross-link: Glycyl lysine isopeptide (Lys-Gly) (interchain with G-Cter in SUMO). An interaction with RNA region spans residues 81 to 86 (RYIEVF). Residue K87 forms a Glycyl lysine isopeptide (Lys-Gly) (interchain with G-Cter in SUMO2) linkage. Residues S104 and S161 each carry the phosphoserine modification. The RRM 2 domain occupies 111-188 (GFVRLRGLPF…RYIEVFKSSQ (78 aa)). A Glycyl lysine isopeptide (Lys-Gly) (interchain with G-Cter in SUMO2) cross-link involves residue K167. Residues 179–184 (RYIEVF) are interaction with RNA. K185 participates in a covalent cross-link: Glycyl lysine isopeptide (Lys-Gly) (interchain with G-Cter in SUMO2). Phosphoserine is present on residues S187, S193, and S195. K200 bears the N6-acetyllysine; alternate mark. K200 is covalently cross-linked (Glycyl lysine isopeptide (Lys-Gly) (interchain with G-Cter in SUMO2); alternate). At T215 the chain carries Phosphothreonine. K224 bears the N6-acetyllysine; alternate mark. K224 is covalently cross-linked (Glycyl lysine isopeptide (Lys-Gly) (interchain with G-Cter in SUMO2); alternate). Position 265 is a phosphoserine (S265). One can recognise an RRM 3 domain in the interval 289-366 (HCVHMRGLPY…IELFLNSTTG (78 aa)). Residues 355 to 360 (RYIELF) form an interaction with RNA region.

Identified in the spliceosome C complex. Interacts with AGO1, AGO2, TBP and TXNL4/DIM1. Post-translationally, sumoylated.

The protein resides in the nucleus. It is found in the nucleoplasm. Its function is as follows. Component of the heterogeneous nuclear ribonucleoprotein (hnRNP) complexes which provide the substrate for the processing events that pre-mRNAs undergo before becoming functional, translatable mRNAs in the cytoplasm. Plays a role in the regulation of alternative splicing events. Binds G-rich sequences in pre-mRNAs and keeps target RNA in an unfolded state. This chain is Heterogeneous nuclear ribonucleoprotein F (HNRNPF), found in Bos taurus (Bovine).